Consider the following 184-residue polypeptide: UPF0301 protein Rsph17029_2659 (184 aa).

This sequence belongs to the UPF0301 (AlgH) family.

The sequence is that of UPF0301 protein Rsph17029_2659 from Cereibacter sphaeroides (strain ATCC 17029 / ATH 2.4.9) (Rhodobacter sphaeroides).